Here is an 89-residue protein sequence, read N- to C-terminus: Ixosin-B (89 aa).

Positions 1 to 26 are cleaved as a signal peptide; the sequence is MASGWTHRLLLLAAVVTLGATPIAAA. Residues 27–57 constitute a propeptide that is removed on maturation; the sequence is SMEYLVTAPGYLTPNADIKITAVVTNPSSAG. A disordered region spans residues 68–89; that stretch reads SGIQPEQHSSGKSDVRRWRSRY. Basic and acidic residues predominate over residues 76–89; that stretch reads SSGKSDVRRWRSRY.

In terms of biological role, has antifungal activity against C.albicans. Has antibacterial activity against the Gram-positive bacterium S.aureus and the Gram-negative bacterium E.coli. Lacks hemolytic activity against rabbit erythrocytes. The protein is Ixosin-B of Ixodes sinensis (Hard tick).